A 207-amino-acid chain; its full sequence is Protein Nef (207 aa).

A lipid anchor (N-myristoyl glycine; by host) is attached at glycine 2. Serine 6 is modified (phosphoserine; by host). The interval 62–66 (EEDSE) is acidic; interacts with host PACS1 and PACS2; stabilizes the interaction of NEF/MHC-I with host AP1M1; necessary for MHC-I internalization. An SH3-binding; interaction with Src family tyrosine kinases region spans residues 70–79 (PVRPQVPLRP). A PxxP; stabilizes the interaction of NEF/MHC-I with host AP1M1; necessary for MHC-I internalization motif is present at residues 73–76 (PQVP). Residues 109 to 125 (EILDLWVYNTQGYFPDW) form a mediates dimerization, Nef-PTE1 interaction region. Residues 149–181 (MDPAEVEEANKGENNSLLHPICQHGMEDEDREV) are binding to ATP6V1H. The Dileucine internalization motif; necessary for CD4 internalization signature appears at 165–166 (LL). Positions 175–176 (ED) match the Diacidic; necessary for CD4 internalization motif.

It belongs to the lentivirus primate group Nef protein family. Monomer; cytosolic form. Homodimer; membrane bound form. Interacts with Nef associated p21-activated kinase (PAK2); this interaction activates PAK2. Associates with the Nef-MHC-I-AP1 complex; this complex is required for MHC-I internalization. Interacts (via C-terminus) with host PI3-kinase. Interacts with host PACS1; this interaction seems to be weak. Interacts with host PACS2. Interacts with host LCK and MAPK3; these interactions inhibit the kinase activity of the latter. Interacts with host ATP6V1H; this interaction may play a role in CD4 endocytosis. Associates with the CD4-Nef-AP2 complex; this complex is required for CD4 internalization. Interacts with host AP2 subunit alpha and AP2 subunit sigma2. Interacts with TCR-zeta chain; this interaction up-regulates the Fas ligand (FasL) surface expression. Interacts with host HCK, LYN, and SRC; these interactions activate the Src family kinases. Interacts with MAP3K5; this interaction inhibits the Fas and TNFR-mediated death signals. Interacts with beta-COP and PTE1. Interacts with human RACK1; this increases Nef phosphorylation by PKC. Interacts with TP53; this interaction decreases the half-life of TP53, protecting the infected cell against p53-mediated apoptosis. Post-translationally, the virion-associated Nef proteins are cleaved by the viral protease to release the soluble C-terminal core protein. Nef is probably cleaved concomitantly with viral structural proteins on maturation of virus particles. In terms of processing, myristoylated. Phosphorylated on serine residues, probably by host PKCdelta and theta.

The protein localises to the host cell membrane. The protein resides in the virion. It is found in the secreted. It localises to the host Golgi apparatus membrane. Factor of infectivity and pathogenicity, required for optimal virus replication. Alters numerous pathways of T-lymphocyte function and down-regulates immunity surface molecules in order to evade host defense and increase viral infectivity. Alters the functionality of other immunity cells, like dendritic cells, monocytes/macrophages and NK cells. Its function is as follows. In infected CD4(+) T-lymphocytes, down-regulates the surface MHC-I, mature MHC-II, CD4, CD28, CCR5 and CXCR4 molecules. Mediates internalization and degradation of host CD4 through the interaction of with the cytoplasmic tail of CD4, the recruitment of AP-2 (clathrin adapter protein complex 2), internalization through clathrin coated pits, and subsequent transport to endosomes and lysosomes for degradation. Diverts host MHC-I molecules to the trans-Golgi network-associated endosomal compartments by an endocytic pathway to finally target them for degradation. MHC-I down-regulation may involve AP-1 (clathrin adapter protein complex 1) or possibly Src family kinase-ZAP70/Syk-PI3K cascade recruited by PACS2. In consequence infected cells are masked for immune recognition by cytotoxic T-lymphocytes. Decreasing the number of immune receptors also prevents reinfection by more HIV particles (superinfection). Down-regulates host SERINC3 and SERINC5 thereby excluding these proteins from the viral particles. Virion infectivity is drastically higher when SERINC3 or SERINC5 are excluded from the viral envelope, because these host antiviral proteins impair the membrane fusion event necessary for subsequent virion penetration. Functionally, bypasses host T-cell signaling by inducing a transcriptional program nearly identical to that of anti-CD3 cell activation. Interaction with TCR-zeta chain up-regulates the Fas ligand (FasL). Increasing surface FasL molecules and decreasing surface MHC-I molecules on infected CD4(+) cells send attacking cytotoxic CD8+ T-lymphocytes into apoptosis. In terms of biological role, plays a role in optimizing the host cell environment for viral replication without causing cell death by apoptosis. Protects the infected cells from apoptosis in order to keep them alive until the next virus generation is ready to strike. Inhibits the Fas and TNFR-mediated death signals by blocking MAP3K5/ASK1. Decreases the half-life of TP53, protecting the infected cell against p53-mediated apoptosis. Inhibits the apoptotic signals regulated by the Bcl-2 family proteins through the formation of a Nef/PI3-kinase/PAK2 complex that leads to activation of PAK2 and induces phosphorylation of host BAD. Extracellular Nef protein targets CD4(+) T-lymphocytes for apoptosis by interacting with CXCR4 surface receptors. The sequence is that of Protein Nef from Homo sapiens (Human).